Here is a 286-residue protein sequence, read N- to C-terminus: Phosphatidylserine decarboxylase proenzyme (286 aa).

Residues aspartate 91, histidine 148, and serine 251 each act as charge relay system; for autoendoproteolytic cleavage activity in the active site. The active-site Schiff-base intermediate with substrate; via pyruvic acid; for decarboxylase activity is serine 251. Serine 251 is modified (pyruvic acid (Ser); by autocatalysis).

It belongs to the phosphatidylserine decarboxylase family. PSD-B subfamily. Prokaryotic type I sub-subfamily. In terms of assembly, heterodimer of a large membrane-associated beta subunit and a small pyruvoyl-containing alpha subunit. Requires pyruvate as cofactor. Post-translationally, is synthesized initially as an inactive proenzyme. Formation of the active enzyme involves a self-maturation process in which the active site pyruvoyl group is generated from an internal serine residue via an autocatalytic post-translational modification. Two non-identical subunits are generated from the proenzyme in this reaction, and the pyruvate is formed at the N-terminus of the alpha chain, which is derived from the carboxyl end of the proenzyme. The autoendoproteolytic cleavage occurs by a canonical serine protease mechanism, in which the side chain hydroxyl group of the serine supplies its oxygen atom to form the C-terminus of the beta chain, while the remainder of the serine residue undergoes an oxidative deamination to produce ammonia and the pyruvoyl prosthetic group on the alpha chain. During this reaction, the Ser that is part of the protease active site of the proenzyme becomes the pyruvoyl prosthetic group, which constitutes an essential element of the active site of the mature decarboxylase.

It localises to the cell membrane. The enzyme catalyses a 1,2-diacyl-sn-glycero-3-phospho-L-serine + H(+) = a 1,2-diacyl-sn-glycero-3-phosphoethanolamine + CO2. It functions in the pathway phospholipid metabolism; phosphatidylethanolamine biosynthesis; phosphatidylethanolamine from CDP-diacylglycerol: step 2/2. Functionally, catalyzes the formation of phosphatidylethanolamine (PtdEtn) from phosphatidylserine (PtdSer). This is Phosphatidylserine decarboxylase proenzyme from Marinobacter nauticus (strain ATCC 700491 / DSM 11845 / VT8) (Marinobacter aquaeolei).